The primary structure comprises 230 residues: Transmembrane protein 225 (230 aa).

The Cytoplasmic segment spans residues methionine 1 to serine 8. Residues isoleucine 9–isoleucine 29 form a helical membrane-spanning segment. Over methionine 30 to arginine 71 the chain is Extracellular. A helical membrane pass occupies residues methionine 72–isoleucine 92. At serine 93 to histidine 99 the chain is on the cytoplasmic side. Residues leucine 100–tyrosine 120 form a helical membrane-spanning segment. Over histidine 121–tryptophan 139 the chain is Extracellular. The helical transmembrane segment at isoleucine 140–isoleucine 160 threads the bilayer. At glutamine 161 to leucine 230 the chain is on the cytoplasmic side. The short motif at arginine 224–tryptophan 228 is the RVxF element.

Interacts (via RVxF motif) with PPP1CC. As to expression, expressed in testis, epididymis and spermatozoa (at protein level). Not expressed in brain, heart, lung, liver, spleen, kidney and skeletal muscle.

The protein resides in the cytoplasmic vesicle. It localises to the secretory vesicle. The protein localises to the acrosome membrane. In terms of biological role, probably inhibits protein phosphatase 1 (PP1) in sperm via binding to catalytic subunit PPP1CC. The chain is Transmembrane protein 225 (Tmem225) from Mus musculus (Mouse).